A 538-amino-acid polypeptide reads, in one-letter code: Phosphoenolpyruvate carboxykinase (ATP) (538 aa).

Arg-62, Tyr-203, and Lys-209 together coordinate substrate. ATP is bound by residues Lys-209, His-228, and 244-252 (GLSGTGKTT). Residues Lys-209 and His-228 each contribute to the Mn(2+) site. Asp-265 provides a ligand contact to Mn(2+). ATP contacts are provided by residues Glu-293, Arg-329, 445-446 (RI), and Thr-451. Residue Arg-329 participates in substrate binding.

This sequence belongs to the phosphoenolpyruvate carboxykinase (ATP) family. In terms of assembly, monomer. The cofactor is Mn(2+).

The protein localises to the cytoplasm. It catalyses the reaction oxaloacetate + ATP = phosphoenolpyruvate + ADP + CO2. The protein operates within carbohydrate biosynthesis; gluconeogenesis. Functionally, involved in the gluconeogenesis. Catalyzes the conversion of oxaloacetate (OAA) to phosphoenolpyruvate (PEP) through direct phosphoryl transfer between the nucleoside triphosphate and OAA. The chain is Phosphoenolpyruvate carboxykinase (ATP) from Haemophilus ducreyi (strain 35000HP / ATCC 700724).